Here is a 906-residue protein sequence, read N- to C-terminus: Protein translocase subunit SecA (906 aa).

ATP-binding positions include glutamine 86, 104 to 108 (GEGKT), and aspartate 499. Residues 865–885 (VSRIDPKDRNPEDPTSWGRVS) are disordered. The Zn(2+) site is built by cysteine 890, cysteine 892, cysteine 901, and histidine 902.

Belongs to the SecA family. In terms of assembly, monomer and homodimer. Part of the essential Sec protein translocation apparatus which comprises SecA, SecYEG and auxiliary proteins SecDF-YajC and YidC. The cofactor is Zn(2+).

The protein localises to the cell inner membrane. The protein resides in the cytoplasm. The catalysed reaction is ATP + H2O + cellular proteinSide 1 = ADP + phosphate + cellular proteinSide 2.. In terms of biological role, part of the Sec protein translocase complex. Interacts with the SecYEG preprotein conducting channel. Has a central role in coupling the hydrolysis of ATP to the transfer of proteins into and across the cell membrane, serving both as a receptor for the preprotein-SecB complex and as an ATP-driven molecular motor driving the stepwise translocation of polypeptide chains across the membrane. This chain is Protein translocase subunit SecA, found in Rickettsia canadensis (strain McKiel).